The chain runs to 171 residues: MSDVKGKSTSGRGLTPKQEKFCQLYIELGNASEAYRQSYDCSKMTTEVINVKASELLNKNGKITVRVEELRQAHQQRHNLTLDNIIADLQEYRDICMGRKPLTITTVVKNAQEGTAQSVNTECFVFEPTGANKALELLGKHLGMFTNKVDVTTDGKPLPTVINVTFSDEPA.

This is an uncharacterized protein from Haemophilus influenzae (strain ATCC 51907 / DSM 11121 / KW20 / Rd).